We begin with the raw amino-acid sequence, 318 residues long: L-malyl-CoA/beta-methylmalyl-CoA lyase (318 aa).

Substrate-binding residues include Phe-19, Arg-24, Lys-30, and Arg-76. 2 residues coordinate Mg(2+): Glu-141 and Asp-168. Substrate contacts are provided by residues 167–168 and 251–252; these read AD and IH.

Belongs to the HpcH/HpaI aldolase family. In terms of assembly, homohexamer. Dimer of trimers. It depends on Mg(2+) as a cofactor. Mn(2+) serves as cofactor.

It catalyses the reaction (S)-malyl-CoA = glyoxylate + acetyl-CoA. The enzyme catalyses (2R,3S)-beta-methylmalyl-CoA = propanoyl-CoA + glyoxylate. Its function is as follows. Involved in the ethylmalonyl-CoA pathway for acetate assimilation. Catalyzes the reversible condensation of glyoxylate and acetyl-CoA to L-malyl-CoA and the reversible condensation of glyoxylate and propionyl-CoA to yield beta-methylmalyl-CoA. The protein is L-malyl-CoA/beta-methylmalyl-CoA lyase of Cereibacter sphaeroides (strain ATCC 17025 / ATH 2.4.3) (Rhodobacter sphaeroides).